Here is a 198-residue protein sequence, read N- to C-terminus: Peptide deformylase (198 aa).

Residues Cys123 and His167 each contribute to the Fe cation site. The active site involves Glu168. Fe cation is bound at residue His171.

The protein belongs to the polypeptide deformylase family. Fe(2+) serves as cofactor.

The catalysed reaction is N-terminal N-formyl-L-methionyl-[peptide] + H2O = N-terminal L-methionyl-[peptide] + formate. Removes the formyl group from the N-terminal Met of newly synthesized proteins. Requires at least a dipeptide for an efficient rate of reaction. N-terminal L-methionine is a prerequisite for activity but the enzyme has broad specificity at other positions. In Ureaplasma parvum serovar 3 (strain ATCC 27815 / 27 / NCTC 11736), this protein is Peptide deformylase.